Reading from the N-terminus, the 208-residue chain is Uracil phosphoribosyltransferase (208 aa).

Residues Arg-78, Arg-103, and 130 to 138 each bind 5-phospho-alpha-D-ribose 1-diphosphate; that span reads DPMLATGGS. Residues Ile-193 and 198–200 contribute to the uracil site; that span reads GDA. Residue Asp-199 coordinates 5-phospho-alpha-D-ribose 1-diphosphate.

The protein belongs to the UPRTase family. It depends on Mg(2+) as a cofactor.

It carries out the reaction UMP + diphosphate = 5-phospho-alpha-D-ribose 1-diphosphate + uracil. Its pathway is pyrimidine metabolism; UMP biosynthesis via salvage pathway; UMP from uracil: step 1/1. Its activity is regulated as follows. Allosterically activated by GTP. Its function is as follows. Catalyzes the conversion of uracil and 5-phospho-alpha-D-ribose 1-diphosphate (PRPP) to UMP and diphosphate. This chain is Uracil phosphoribosyltransferase, found in Aliivibrio fischeri (strain MJ11) (Vibrio fischeri).